We begin with the raw amino-acid sequence, 472 residues long: Succinate-semialdehyde dehydrogenase [NADP(+)] (472 aa).

NADP(+)-binding positions include 134–135 (WN), 158–161 (KHAS), and 210–211 (GS). Glutamate 232 (proton acceptor) is an active-site residue. NADP(+) is bound at residue leucine 233. The active-site Nucleophile is cysteine 266. Glutamate 363 serves as a coordination point for NADP(+).

Belongs to the aldehyde dehydrogenase family.

It catalyses the reaction succinate semialdehyde + NADP(+) + H2O = succinate + NADPH + 2 H(+). Catalyzes the NADP(+)-dependent oxidation of succinate semialdehyde to succinate. It is believed to be the main source of succinate semialdehyde dehydrogenase activity in Mycobacterium. In Mycobacterium avium (strain 104), this protein is Succinate-semialdehyde dehydrogenase [NADP(+)] (gabD1).